Here is a 301-residue protein sequence, read N- to C-terminus: Phosphatidylglycerol--prolipoprotein diacylglyceryl transferase (301 aa).

4 helical membrane-spanning segments follow: residues isoleucine 10 to phenylalanine 30, leucine 57 to tyrosine 77, valine 92 to tryptophan 112, and methionine 119 to glycine 139. Arginine 140 lines the a 1,2-diacyl-sn-glycero-3-phospho-(1'-sn-glycerol) pocket. Transmembrane regions (helical) follow at residues proline 202 to phenylalanine 222, tyrosine 230 to valine 250, and leucine 264 to leucine 284.

This sequence belongs to the Lgt family.

It is found in the cell inner membrane. The catalysed reaction is L-cysteinyl-[prolipoprotein] + a 1,2-diacyl-sn-glycero-3-phospho-(1'-sn-glycerol) = an S-1,2-diacyl-sn-glyceryl-L-cysteinyl-[prolipoprotein] + sn-glycerol 1-phosphate + H(+). Its pathway is protein modification; lipoprotein biosynthesis (diacylglyceryl transfer). Functionally, catalyzes the transfer of the diacylglyceryl group from phosphatidylglycerol to the sulfhydryl group of the N-terminal cysteine of a prolipoprotein, the first step in the formation of mature lipoproteins. The chain is Phosphatidylglycerol--prolipoprotein diacylglyceryl transferase from Xylella fastidiosa (strain M12).